The sequence spans 198 residues: dTTP/UTP pyrophosphatase (198 aa).

Catalysis depends on D78, which acts as the Proton acceptor.

This sequence belongs to the Maf family. YhdE subfamily. Requires a divalent metal cation as cofactor.

Its subcellular location is the cytoplasm. The enzyme catalyses dTTP + H2O = dTMP + diphosphate + H(+). The catalysed reaction is UTP + H2O = UMP + diphosphate + H(+). Nucleoside triphosphate pyrophosphatase that hydrolyzes dTTP and UTP. May have a dual role in cell division arrest and in preventing the incorporation of modified nucleotides into cellular nucleic acids. The chain is dTTP/UTP pyrophosphatase from Chromobacterium violaceum (strain ATCC 12472 / DSM 30191 / JCM 1249 / CCUG 213 / NBRC 12614 / NCIMB 9131 / NCTC 9757 / MK).